We begin with the raw amino-acid sequence, 313 residues long: Beta-ketoacyl-[acyl-carrier-protein] synthase III (313 aa).

Catalysis depends on residues C112 and H238. The segment at 239–243 is ACP-binding; sequence QANIR. N268 is an active-site residue.

It belongs to the thiolase-like superfamily. FabH family. In terms of assembly, homodimer.

The protein localises to the cytoplasm. It catalyses the reaction malonyl-[ACP] + acetyl-CoA + H(+) = 3-oxobutanoyl-[ACP] + CO2 + CoA. The protein operates within lipid metabolism; fatty acid biosynthesis. Catalyzes the condensation reaction of fatty acid synthesis by the addition to an acyl acceptor of two carbons from malonyl-ACP. Catalyzes the first condensation reaction which initiates fatty acid synthesis and may therefore play a role in governing the total rate of fatty acid production. Possesses both acetoacetyl-ACP synthase and acetyl transacylase activities. Its substrate specificity determines the biosynthesis of branched-chain and/or straight-chain of fatty acids. This chain is Beta-ketoacyl-[acyl-carrier-protein] synthase III, found in Staphylococcus saprophyticus subsp. saprophyticus (strain ATCC 15305 / DSM 20229 / NCIMB 8711 / NCTC 7292 / S-41).